A 771-amino-acid chain; its full sequence is Polyribonucleotide nucleotidyltransferase (771 aa).

Positions 487 and 493 each coordinate Mg(2+). A KH domain is found at 554-613; that stretch reads PRIETMQIDKAKIRDVIGTGGKVIREIVATTGAKVDIDDEGLIKISSSDLDQIEAARKWI. One can recognise an S1 motif domain in the interval 623–691; it reads GKIYDGKVVN…PRGKVRLSMR (69 aa). Positions 696-771 are disordered; that stretch reads ETGAELEDTR…QGHVPDFLKD (76 aa). A compositionally biased stretch (basic and acidic residues) spans 702–771; it reads EDTRPAREPR…QGHVPDFLKD (70 aa).

Belongs to the polyribonucleotide nucleotidyltransferase family. The cofactor is Mg(2+).

It is found in the cytoplasm. It carries out the reaction RNA(n+1) + phosphate = RNA(n) + a ribonucleoside 5'-diphosphate. Functionally, involved in mRNA degradation. Catalyzes the phosphorolysis of single-stranded polyribonucleotides processively in the 3'- to 5'-direction. The sequence is that of Polyribonucleotide nucleotidyltransferase from Sphingopyxis alaskensis (strain DSM 13593 / LMG 18877 / RB2256) (Sphingomonas alaskensis).